Consider the following 156-residue polypeptide: Flagellar assembly factor FliW (156 aa).

This sequence belongs to the FliW family. Interacts with translational regulator CsrA and flagellin(s).

It is found in the cytoplasm. In terms of biological role, acts as an anti-CsrA protein, binds CsrA and prevents it from repressing translation of its target genes, one of which is flagellin. Binds to flagellin and participates in the assembly of the flagellum. In Pseudothermotoga lettingae (strain ATCC BAA-301 / DSM 14385 / NBRC 107922 / TMO) (Thermotoga lettingae), this protein is Flagellar assembly factor FliW.